The primary structure comprises 750 residues: Photosystem I P700 chlorophyll a apoprotein A1 (750 aa).

8 consecutive transmembrane segments (helical) span residues 70–93 (VFSAHFGQLSIIFLWLSGMYFHGA), 156–179 (LYCTAIGALVFAALMLFAGWFHYH), 195–219 (LNHHLAGLLGLGSLSWAGHQVHVSL), 291–309 (IAHHHLAIAILFLIAGHMY), 346–369 (WHAQLSLNLAMLGSLTIIVAHHMY), 385–411 (LSLFTHHMWIGGFLIVGAAAHAAIFMV), 433–455 (AIISHLNWVCIFLGFHSFGLYIH), and 531–549 (FLVHHIHAFTIHVTVLILL). Positions 573 and 582 each coordinate [4Fe-4S] cluster. Helical transmembrane passes span 589–610 (HVFLGLFWMYNAISVVIFHFSW) and 664–686 (LSAYGLFFLGAHFVWAFSLMFLF). Histidine 675 contributes to the chlorophyll a' binding site. Positions 683 and 691 each coordinate chlorophyll a. Phylloquinone is bound at residue tryptophan 692. A helical membrane pass occupies residues 724-744 (AVGVTHYLLGGIATTWAFFLA).

This sequence belongs to the PsaA/PsaB family. As to quaternary structure, the PsaA/B heterodimer binds the P700 chlorophyll special pair and subsequent electron acceptors. PSI consists of a core antenna complex that captures photons, and an electron transfer chain that converts photonic excitation into a charge separation. The eukaryotic PSI reaction center is composed of at least 11 subunits. P700 is a chlorophyll a/chlorophyll a' dimer, A0 is one or more chlorophyll a, A1 is one or both phylloquinones and FX is a shared 4Fe-4S iron-sulfur center. is required as a cofactor.

The protein localises to the plastid. The protein resides in the chloroplast thylakoid membrane. It catalyses the reaction reduced [plastocyanin] + hnu + oxidized [2Fe-2S]-[ferredoxin] = oxidized [plastocyanin] + reduced [2Fe-2S]-[ferredoxin]. PsaA and PsaB bind P700, the primary electron donor of photosystem I (PSI), as well as the electron acceptors A0, A1 and FX. PSI is a plastocyanin-ferredoxin oxidoreductase, converting photonic excitation into a charge separation, which transfers an electron from the donor P700 chlorophyll pair to the spectroscopically characterized acceptors A0, A1, FX, FA and FB in turn. Oxidized P700 is reduced on the lumenal side of the thylakoid membrane by plastocyanin. The polypeptide is Photosystem I P700 chlorophyll a apoprotein A1 (Arabidopsis thaliana (Mouse-ear cress)).